The sequence spans 192 residues: Xanthine phosphoribosyltransferase 2 (192 aa).

Leucine 20 and asparagine 27 together coordinate xanthine. 131-135 (ANACA) contacts 5-phospho-alpha-D-ribose 1-diphosphate. Lysine 159 is a xanthine binding site.

This sequence belongs to the purine/pyrimidine phosphoribosyltransferase family. Xpt subfamily. In terms of assembly, homodimer.

The protein resides in the cytoplasm. It carries out the reaction XMP + diphosphate = xanthine + 5-phospho-alpha-D-ribose 1-diphosphate. It participates in purine metabolism; XMP biosynthesis via salvage pathway; XMP from xanthine: step 1/1. Converts the preformed base xanthine, a product of nucleic acid breakdown, to xanthosine 5'-monophosphate (XMP), so it can be reused for RNA or DNA synthesis. In Clostridium perfringens (strain ATCC 13124 / DSM 756 / JCM 1290 / NCIMB 6125 / NCTC 8237 / Type A), this protein is Xanthine phosphoribosyltransferase 2.